Consider the following 183-residue polypeptide: Dual-action ribosomal maturation protein DarP (183 aa).

Positions 1–27 are disordered; that stretch reads MSSHSQEPVGEENFDDSEYDRPNKSQV. Over residues 9-18 the composition is skewed to acidic residues; that stretch reads VGEENFDDSE.

This sequence belongs to the DarP family.

The protein resides in the cytoplasm. Its function is as follows. Member of a network of 50S ribosomal subunit biogenesis factors which assembles along the 30S-50S interface, preventing incorrect 23S rRNA structures from forming. Promotes peptidyl transferase center (PTC) maturation. This is Dual-action ribosomal maturation protein DarP from Bordetella pertussis (strain Tohama I / ATCC BAA-589 / NCTC 13251).